A 724-amino-acid chain; its full sequence is MDGNGIGSTGKCPVMHGGNTAMGTSNTDWWPNALNLDILHQHDSKTNPMGPGFDYRRALQGLDVTALKRDLHALMTDSQDWWPADWGHYGGLMIRMAWHAAGSYRTADGRGGGGTGNQRFAPLNSWPDNVNLDKARRLLWPVKKKYGNAISWADLIILAGTVAYESMGLKTFGFAFGRADIWHPEKDTYWGAEKEWLAPSDSRYGDVADPASMENPLAAVQMGLIYVNPQGVNGEPDPLRTALHVRETFARMAMNDEETVALTAGGHTVGKCHGNGDAALIGPDPEAADVVEQGLGWMNHSTRGVGRNTVTSGIEGAWTTHPTRWDNGYFDLLFGYEWELRKSPAGAWQWEPIDIREEDKPVDVEDPSIRYNPIMTDADMAMKMDPIYRPIAERFHRDPAYFSDVFARAWFKLTHRDMGPKARYLGPDVPQEDLIWQDPVPAGRTDYDVAAVKARIAASGLSVAELVSTAWDSARTFRGSDMRGGANGARIRLAPQKDWEGNEPARLATVLGVLEGIAAETGASVADVIVLGGNVGVEQAARAAGFEITVPFAPGRGDATDDMTDAASFDVLEPIHDAFRNWLKKDYTVSPEELMLDRAQLMGLTAHEMTVLLGGMRVLGTNHGGTKHGVLTDREGALTTDFFVNLTDMANVWKPADANLYEIRDRRTGAVKWTATRVDLVFGSNSVLRAYAEVYAQDDSREKFVQDFVAAWAKVMNADRFDIA.

Positions 98–226 (WHAAGSYRTA…LAAVQMGLIY (129 aa)) form a cross-link, tryptophyl-tyrosyl-methioninium (Trp-Tyr) (with M-252). Catalysis depends on His99, which acts as the Proton acceptor. The segment at residues 226–252 (YVNPQGVNGEPDPLRTALHVRETFARM) is a cross-link (tryptophyl-tyrosyl-methioninium (Tyr-Met) (with W-98)). His267 contacts heme b.

Belongs to the peroxidase family. Peroxidase/catalase subfamily. As to quaternary structure, homodimer or homotetramer. Requires heme b as cofactor. In terms of processing, formation of the three residue Trp-Tyr-Met cross-link is important for the catalase, but not the peroxidase activity of the enzyme.

The catalysed reaction is H2O2 + AH2 = A + 2 H2O. It carries out the reaction 2 H2O2 = O2 + 2 H2O. Functionally, bifunctional enzyme with both catalase and broad-spectrum peroxidase activity. The chain is Catalase-peroxidase from Cereibacter sphaeroides (strain ATCC 17025 / ATH 2.4.3) (Rhodobacter sphaeroides).